The chain runs to 127 residues: Small ribosomal subunit protein uS13 (127 aa).

The interval 95–127 (GLPVHGQRTSTNARTRKGPRRAAVKKKGGAKKK) is disordered. The segment covering 108-127 (RTRKGPRRAAVKKKGGAKKK) has biased composition (basic residues).

The protein belongs to the universal ribosomal protein uS13 family. As to quaternary structure, part of the 30S ribosomal subunit. Forms a loose heterodimer with protein S19. Forms two bridges to the 50S subunit in the 70S ribosome.

Located at the top of the head of the 30S subunit, it contacts several helices of the 16S rRNA. In the 70S ribosome it contacts the 23S rRNA (bridge B1a) and protein L5 of the 50S subunit (bridge B1b), connecting the 2 subunits; these bridges are implicated in subunit movement. Contacts the tRNAs in the A and P-sites. This is Small ribosomal subunit protein uS13 from Desulfatibacillum aliphaticivorans.